A 61-amino-acid polypeptide reads, in one-letter code: Probradykinin-2 (61 aa).

Residues 1-22 form the signal peptide; the sequence is MSFLKKSLFLVLFLGLVSFSIC. Positions 23–50 are excised as a propeptide; it reads EEEKRETEEEENEDEIEEQSEEKKRFEP. Residues 24 to 61 are disordered; the sequence is EEKRETEEEENEDEIEEQSEEKKRFEPVPPGFTPFRQT. Acidic residues predominate over residues 30-42; the sequence is EEEENEDEIEEQS. Pro-52 bears the 4-hydroxyproline mark.

Belongs to the frog skin active peptide (FSAP) family. Bradykinin-related peptide subfamily. As to expression, expressed by the skin glands.

The protein localises to the secreted. May produce in vitro relaxation of rat arterial smooth muscle and constriction of intestinal smooth muscle. May target bradykinin receptors (BDKRB). The polypeptide is Probradykinin-2 (Pithecopus azureus (Orange-legged monkey tree frog)).